Reading from the N-terminus, the 316-residue chain is Ribosomal RNA small subunit methyltransferase H (316 aa).

S-adenosyl-L-methionine contacts are provided by residues 35 to 37 (AGH), D55, F84, D105, and Q112.

The protein belongs to the methyltransferase superfamily. RsmH family.

The protein resides in the cytoplasm. The enzyme catalyses cytidine(1402) in 16S rRNA + S-adenosyl-L-methionine = N(4)-methylcytidine(1402) in 16S rRNA + S-adenosyl-L-homocysteine + H(+). Its function is as follows. Specifically methylates the N4 position of cytidine in position 1402 (C1402) of 16S rRNA. The polypeptide is Ribosomal RNA small subunit methyltransferase H (Streptococcus pneumoniae serotype 4 (strain ATCC BAA-334 / TIGR4)).